The primary structure comprises 916 residues: Alanine--tRNA ligase (916 aa).

Zn(2+) contacts are provided by H611, H615, C714, and H718.

It belongs to the class-II aminoacyl-tRNA synthetase family. Zn(2+) is required as a cofactor.

The protein localises to the cytoplasm. It catalyses the reaction tRNA(Ala) + L-alanine + ATP = L-alanyl-tRNA(Ala) + AMP + diphosphate. Functionally, catalyzes the attachment of alanine to tRNA(Ala) in a two-step reaction: alanine is first activated by ATP to form Ala-AMP and then transferred to the acceptor end of tRNA(Ala). Also edits incorrectly charged Ser-tRNA(Ala) and Gly-tRNA(Ala) via its editing domain. The chain is Alanine--tRNA ligase from Methanospirillum hungatei JF-1 (strain ATCC 27890 / DSM 864 / NBRC 100397 / JF-1).